A 175-amino-acid polypeptide reads, in one-letter code: Major MR/P fimbria protein (175 aa).

An N-terminal signal peptide occupies residues 1–23 (MKLNKLALVLGLGLSVVAGSALA). A disulfide bridge connects residues Cys42 and Cys81.

Belongs to the fimbrial protein family.

It localises to the fimbrium. Its function is as follows. Major structural component of mannose-resistant/proteus-like fimbriae of P.mirabilis. This is Major MR/P fimbria protein (mrpA) from Proteus mirabilis (strain HI4320).